Reading from the N-terminus, the 410-residue chain is Translation initiation factor 2 subunit gamma (410 aa).

Positions Gln-6–Glu-203 constitute a tr-type G domain. Positions Gly-15–Thr-22 are G1. Asp-18, Thr-22, Gly-43, and Ser-45 together coordinate Mg(2+). Asp-18–Ser-23 contributes to the GTP binding site. The tract at residues Gly-43–Arg-47 is G2. Positions 58, 61, 73, and 76 each coordinate Zn(2+). Residues Asp-90–Gly-93 form a G3 region. GTP-binding positions include Asn-146 to Asp-149 and Ser-181 to His-183. The segment at Asn-146–Asp-149 is G4. Residues Ser-181–His-183 form a G5 region.

This sequence belongs to the TRAFAC class translation factor GTPase superfamily. Classic translation factor GTPase family. EIF2G subfamily. Heterotrimer composed of an alpha, a beta and a gamma chain. Mg(2+) serves as cofactor.

The enzyme catalyses GTP + H2O = GDP + phosphate + H(+). Functionally, eIF-2 functions in the early steps of protein synthesis by forming a ternary complex with GTP and initiator tRNA. The chain is Translation initiation factor 2 subunit gamma from Methanococcus aeolicus (strain ATCC BAA-1280 / DSM 17508 / OCM 812 / Nankai-3).